We begin with the raw amino-acid sequence, 462 residues long: Argininosuccinate lyase (462 aa).

Belongs to the lyase 1 family. Argininosuccinate lyase subfamily.

Its subcellular location is the cytoplasm. It carries out the reaction 2-(N(omega)-L-arginino)succinate = fumarate + L-arginine. It participates in amino-acid biosynthesis; L-arginine biosynthesis; L-arginine from L-ornithine and carbamoyl phosphate: step 3/3. The sequence is that of Argininosuccinate lyase from Caldicellulosiruptor bescii (strain ATCC BAA-1888 / DSM 6725 / KCTC 15123 / Z-1320) (Anaerocellum thermophilum).